Consider the following 177-residue polypeptide: GTP-dependent dephospho-CoA kinase (177 aa).

D48, V49, V50, D67, K69, and E124 together coordinate GTP.

The protein belongs to the GTP-dependent DPCK family.

It catalyses the reaction 3'-dephospho-CoA + GTP = GDP + CoA + H(+). Its pathway is cofactor biosynthesis; coenzyme A biosynthesis. Its function is as follows. Catalyzes the GTP-dependent phosphorylation of the 3'-hydroxyl group of dephosphocoenzyme A to form coenzyme A (CoA). This Pyrococcus furiosus (strain ATCC 43587 / DSM 3638 / JCM 8422 / Vc1) protein is GTP-dependent dephospho-CoA kinase.